The sequence spans 739 residues: Endoglucanase F (739 aa).

A signal peptide spans 1-27 (MKKILAFLLTVALVAVVAIPQAVVSFA). The catalytic stretch occupies residues 28–470 (ADFNYGEALQ…AKMYEKYGGE (443 aa)). The Nucleophile role is filled by aspartate 84. Active-site residues include histidine 400, aspartate 438, and glutamate 447. Residues 480 to 639 (TPGEEFYVEA…NVRVWGKVPD (160 aa)) enclose the CBM3 domain. The Dockerin domain occupies 664–737 (PGIMLGDVNF…ILKLIEKFPA (74 aa)).

The protein belongs to the glycosyl hydrolase 9 (cellulase E) family. Requires Ca(2+) as cofactor.

The enzyme catalyses Endohydrolysis of (1-&gt;4)-beta-D-glucosidic linkages in cellulose, lichenin and cereal beta-D-glucans.. This enzyme catalyzes the endohydrolysis of 1,4-beta-glucosidic linkages in cellulose, lichenin and cereal beta-D-glucans. In Acetivibrio thermocellus (strain ATCC 27405 / DSM 1237 / JCM 9322 / NBRC 103400 / NCIMB 10682 / NRRL B-4536 / VPI 7372) (Clostridium thermocellum), this protein is Endoglucanase F (celF).